Reading from the N-terminus, the 315-residue chain is Glutathione synthetase (315 aa).

The 186-residue stretch at lysine 125 to glutamate 310 folds into the ATP-grasp domain. Arginine 256 is a glycosylation site (N-beta-linked (GlcNAc) arginine). Mg(2+) is bound by residues glutamate 281 and asparagine 283.

The protein belongs to the prokaryotic GSH synthase family. Mg(2+) is required as a cofactor. It depends on Mn(2+) as a cofactor. Post-translationally, glycosylation at Arg-256 by NleB enhances the glutathione synthetase activity, leading to an increase in glutathione production. Glycosylation may promote C.rodentium survival in oxidative stress conditions.

It carries out the reaction gamma-L-glutamyl-L-cysteine + glycine + ATP = glutathione + ADP + phosphate + H(+). The protein operates within sulfur metabolism; glutathione biosynthesis; glutathione from L-cysteine and L-glutamate: step 2/2. In Citrobacter rodentium, this protein is Glutathione synthetase.